A 302-amino-acid chain; its full sequence is Recombination-associated protein RdgC (302 aa).

The protein belongs to the RdgC family.

The protein resides in the cytoplasm. It is found in the nucleoid. Functionally, may be involved in recombination. The chain is Recombination-associated protein RdgC from Xanthomonas campestris pv. campestris (strain 8004).